Reading from the N-terminus, the 234-residue chain is BTB/POZ domain-containing protein KCTD5 (234 aa).

A2 is subject to N-acetylalanine. The BTB domain maps to 44-146; that stretch reads KWVRLNVGGT…LVKDKIRERD (103 aa). Positions 213-234 are disordered; that stretch reads PYGTTSEPSEKAKILQERGSRM. Basic and acidic residues predominate over residues 220–234; that stretch reads PSEKAKILQERGSRM.

In terms of assembly, homopentamer. Interacts (via C-terminus) with GRASP55/GORASP2. Interacts with CUL3 and with ubiquitinated proteins. Interacts with CRY1.

It is found in the cytoplasm. The protein localises to the cytosol. It localises to the nucleus. Its function is as follows. Its interaction with CUL3 suggests that it may act as a substrate adapter in some E3 ligase complex. Does not affect the function of Kv channel Kv2.1/KCNB1, Kv1.2/KCNA2, Kv4.2/KCND2 and Kv3.4/KCNC4. The polypeptide is BTB/POZ domain-containing protein KCTD5 (Kctd5) (Rattus norvegicus (Rat)).